The sequence spans 134 residues: Small ribosomal subunit protein bS6 (134 aa).

The protein belongs to the bacterial ribosomal protein bS6 family.

Binds together with bS18 to 16S ribosomal RNA. The polypeptide is Small ribosomal subunit protein bS6 (Chlorobium phaeobacteroides (strain BS1)).